Here is a 236-residue protein sequence, read N- to C-terminus: Uridylate kinase (236 aa).

Position 10–13 (10–13 (KLSG)) interacts with ATP. UMP is bound at residue Gly52. 2 residues coordinate ATP: Gly53 and Arg57. Residues Asp72 and 133 to 140 (TGNPFFTT) contribute to the UMP site. Thr160, Tyr166, and Asp169 together coordinate ATP.

The protein belongs to the UMP kinase family. In terms of assembly, homohexamer.

The protein resides in the cytoplasm. The enzyme catalyses UMP + ATP = UDP + ADP. Its pathway is pyrimidine metabolism; CTP biosynthesis via de novo pathway; UDP from UMP (UMPK route): step 1/1. Inhibited by UTP. In terms of biological role, catalyzes the reversible phosphorylation of UMP to UDP. The protein is Uridylate kinase of Bacteroides fragilis (strain ATCC 25285 / DSM 2151 / CCUG 4856 / JCM 11019 / LMG 10263 / NCTC 9343 / Onslow / VPI 2553 / EN-2).